The chain runs to 234 residues: LexA repressor (234 aa).

Positions 26 to 46 (FEEMKEALDLKSKSGVHRLIS) form a DNA-binding region, H-T-H motif. A disordered region spans residues 73–100 (AVGKAAPVSQREAANTNSALPPLRAAPK). A compositionally biased stretch (low complexity) spans 91–100 (ALPPLRAAPK). Catalysis depends on for autocatalytic cleavage activity residues serine 154 and lysine 192.

Belongs to the peptidase S24 family. In terms of assembly, homodimer.

The enzyme catalyses Hydrolysis of Ala-|-Gly bond in repressor LexA.. In terms of biological role, represses a number of genes involved in the response to DNA damage (SOS response), including recA and lexA. In the presence of single-stranded DNA, RecA interacts with LexA causing an autocatalytic cleavage which disrupts the DNA-binding part of LexA, leading to derepression of the SOS regulon and eventually DNA repair. This chain is LexA repressor, found in Novosphingobium aromaticivorans (strain ATCC 700278 / DSM 12444 / CCUG 56034 / CIP 105152 / NBRC 16084 / F199).